The primary structure comprises 948 residues: ELKS/Rab6-interacting/CAST family member 1 (948 aa).

Positions 1–54 (MYGSARSVGKVEPSSQSPGRSPRLPRSPRLGHRRTNSTGGSSGNSVGGGSGKTL) are disordered. Lys10 bears the N6-acetyllysine mark. Over residues 13-28 (PSSQSPGRSPRLPRSP) the composition is skewed to low complexity. Phosphoserine is present on residues Ser17, Ser21, and Ser37. Phosphothreonine is present on Thr38. A compositionally biased stretch (gly residues) spans 40–51 (GSSGNSVGGGSG). Phosphoserine is present on residues Ser55, Ser75, Ser94, Ser796, and Ser937. Positions 144–920 (RQARDNTIMD…RMKLMADNYE (777 aa)) form a coiled coil. A compositionally biased stretch (basic and acidic residues) spans 773 to 796 (KHKEQVEKKKSAQMLEEARRREDS). 2 disordered regions span residues 773-801 (KHKEQVEKKKSAQMLEEARRREDSLSDSS) and 903-948 (QLKQ…GIWA). Residues 939–948 (DQDEEEGIWA) show a composition bias toward acidic residues.

As to quaternary structure, interacts with the GTB-bound forms of RAB6A isoform 1 and isoform 2 and with RAB6B. The interaction was strongest with RAB6B, followed by RAB6A isoform 2 and weakest with RAB6A isoform 1. Part of a complex with CHUK, IKBKB and IKBKG. Interacts with CHUK, IKBKB and IKBKG. The interaction with IKBKG is independent of CHUK and IKBKB. Interacts with NFKBIA. Isoform 1 interacts through its C-terminus with the PDZ domains of RIMS1 and RIMS2. Interacts with ERC2/CAST1. Interacts with SDCCAG8. Part of a cortical microtubule stabilization complex (CMSC) composed of KANK1, PPFIA1, PPFIBP1, ERC1/ELKS, PHLDB2/LL5beta, CLASPs, KIF21A and possibly additional interactors; within CMSCs KANK1 and PHLDB2/LL5beta appear to be the core components for targeting of microtubule-binding proteins KIF21A and CLASPs, whereas PPFIA1, PPFIBP1 and ERC1/ELKS serve as scaffolds for protein clustering. In terms of tissue distribution, isoform 1 is specifically expressed in brain. A further probable isoform is widely expressed outside of brain It is referred to as ERC1a by PubMed:12391317 and characterized by a C-terminus identical to that of isoforms 1 in human and mouse.

It is found in the cytoplasm. The protein localises to the cytoskeleton. The protein resides in the microtubule organizing center. It localises to the centrosome. Its subcellular location is the membrane. It is found in the golgi apparatus membrane. The protein localises to the presynaptic active zone. The protein resides in the cell projection. It localises to the podosome. Its function is as follows. Regulatory subunit of the IKK complex. Probably recruits IkappaBalpha/NFKBIA to the complex. May be involved in the organization of the cytomatrix at the nerve terminals active zone (CAZ) which regulates neurotransmitter release. May be involved in vesicle trafficking at the CAZ. May be involved in Rab-6 regulated endosomes to Golgi transport. This chain is ELKS/Rab6-interacting/CAST family member 1 (Erc1), found in Rattus norvegicus (Rat).